Reading from the N-terminus, the 156-residue chain is Ribosomal RNA large subunit methyltransferase H (156 aa).

S-adenosyl-L-methionine-binding positions include Leu-73, Gly-104, and 123–128; that span reads LSALTL.

The protein belongs to the RNA methyltransferase RlmH family. Homodimer.

The protein localises to the cytoplasm. The enzyme catalyses pseudouridine(1915) in 23S rRNA + S-adenosyl-L-methionine = N(3)-methylpseudouridine(1915) in 23S rRNA + S-adenosyl-L-homocysteine + H(+). Functionally, specifically methylates the pseudouridine at position 1915 (m3Psi1915) in 23S rRNA. The sequence is that of Ribosomal RNA large subunit methyltransferase H from Shewanella loihica (strain ATCC BAA-1088 / PV-4).